The chain runs to 260 residues: ATP synthase subunit a (260 aa).

The propeptide at 1–11 (MQNTLLRTYIN) is removed in mature form. Helical transmembrane passes span 37 to 57 (ITTFTLYTIIVLLVVSSLYVL), 96 to 116 (YFPFIYTLFMFILISNLISMI), 126 to 146 (FVFIISLSMIIWLGITILSLF), 152 to 172 (FFSLFVPSGTALPLVPLLVVI), 192 to 212 (IFSGHLLMAILAGLTMTFVQI), and 217 to 237 (LILGFIPLAIILIIMCLEFGI).

The protein belongs to the ATPase A chain family. As to quaternary structure, F-type ATPases have 2 components, CF(1) - the catalytic core - and CF(0) - the membrane proton channel. CF(1) has five subunits: alpha(3), beta(3), gamma(1), delta(1), epsilon(1). CF(0) has three main subunits: a, b and c.

It is found in the mitochondrion inner membrane. Mitochondrial membrane ATP synthase (F(1)F(0) ATP synthase or Complex V) produces ATP from ADP in the presence of a proton gradient across the membrane which is generated by electron transport complexes of the respiratory chain. F-type ATPases consist of two structural domains, F(1) - containing the extramembraneous catalytic core and F(0) - containing the membrane proton channel, linked together by a central stalk and a peripheral stalk. During catalysis, ATP synthesis in the catalytic domain of F(1) is coupled via a rotary mechanism of the central stalk subunits to proton translocation. Key component of the proton channel; it may play a direct role in the translocation of protons across the membrane. The protein is ATP synthase subunit a (ATP6) of Candida glabrata (strain ATCC 2001 / BCRC 20586 / JCM 3761 / NBRC 0622 / NRRL Y-65 / CBS 138) (Yeast).